The primary structure comprises 101 residues: MAKKSMIEREKKRERLVAQYAAKRAELKEIANDESRPMEERFKARLKLAKLPRNSSATRLHNRCQLTGRPHAYYRKLKVSRIMLRELGSAGQIPGMVKSSW.

It belongs to the universal ribosomal protein uS14 family. Part of the 30S ribosomal subunit. Contacts proteins S3 and S10.

Its function is as follows. Binds 16S rRNA, required for the assembly of 30S particles and may also be responsible for determining the conformation of the 16S rRNA at the A site. The sequence is that of Small ribosomal subunit protein uS14 from Ruegeria pomeroyi (strain ATCC 700808 / DSM 15171 / DSS-3) (Silicibacter pomeroyi).